Here is a 452-residue protein sequence, read N- to C-terminus: tRNA modification GTPase MnmE (452 aa).

R21, E78, and K118 together coordinate (6S)-5-formyl-5,6,7,8-tetrahydrofolate. Residues 214 to 375 (GMKVVIAGRP…LREHLKKSMG (162 aa)) enclose the TrmE-type G domain. N224 provides a ligand contact to K(+). GTP contacts are provided by residues 224-229 (NAGKSS), 243-249 (TNIAGTT), and 268-271 (DTAG). S228 is a Mg(2+) binding site. Positions 243, 245, and 248 each coordinate K(+). T249 lines the Mg(2+) pocket. A (6S)-5-formyl-5,6,7,8-tetrahydrofolate-binding site is contributed by K452.

It belongs to the TRAFAC class TrmE-Era-EngA-EngB-Septin-like GTPase superfamily. TrmE GTPase family. As to quaternary structure, homodimer. Heterotetramer of two MnmE and two MnmG subunits. The cofactor is K(+).

It localises to the cytoplasm. Exhibits a very high intrinsic GTPase hydrolysis rate. Involved in the addition of a carboxymethylaminomethyl (cmnm) group at the wobble position (U34) of certain tRNAs, forming tRNA-cmnm(5)s(2)U34. The polypeptide is tRNA modification GTPase MnmE (Actinobacillus pleuropneumoniae serotype 3 (strain JL03)).